The sequence spans 105 residues: Integration host factor subunit alpha (105 aa).

This sequence belongs to the bacterial histone-like protein family. As to quaternary structure, heterodimer of an alpha and a beta chain.

Functionally, this protein is one of the two subunits of integration host factor, a specific DNA-binding protein that functions in genetic recombination as well as in transcriptional and translational control. The protein is Integration host factor subunit alpha of Rhodospirillum rubrum (strain ATCC 11170 / ATH 1.1.1 / DSM 467 / LMG 4362 / NCIMB 8255 / S1).